The sequence spans 508 residues: Photosystem II CP47 reaction center protein (508 aa).

6 helical membrane passes run 21-36 (SVHI…WAGS), 101-115 (IVFS…IWHW), 140-156 (GIHL…FGAF), 203-218 (IAAG…FHLS), 237-252 (VLSS…AFVV), and 457-472 (SFAL…HGAR).

It belongs to the PsbB/PsbC family. PsbB subfamily. PSII is composed of 1 copy each of membrane proteins PsbA, PsbB, PsbC, PsbD, PsbE, PsbF, PsbH, PsbI, PsbJ, PsbK, PsbL, PsbM, PsbT, PsbX, PsbY, PsbZ, Psb30/Ycf12, at least 3 peripheral proteins of the oxygen-evolving complex and a large number of cofactors. It forms dimeric complexes. It depends on Binds multiple chlorophylls. PSII binds additional chlorophylls, carotenoids and specific lipids. as a cofactor.

It localises to the plastid. It is found in the chloroplast thylakoid membrane. Functionally, one of the components of the core complex of photosystem II (PSII). It binds chlorophyll and helps catalyze the primary light-induced photochemical processes of PSII. PSII is a light-driven water:plastoquinone oxidoreductase, using light energy to abstract electrons from H(2)O, generating O(2) and a proton gradient subsequently used for ATP formation. The chain is Photosystem II CP47 reaction center protein from Nuphar advena (Common spatterdock).